Reading from the N-terminus, the 95-residue chain is Alpha-bungarotoxin isoform V31 (95 aa).

An N-terminal signal peptide occupies residues 1–21 (MKTLLLTLVVVTIVCLDLGYT). 5 disulfides stabilise this stretch: Cys-24/Cys-44, Cys-37/Cys-65, Cys-50/Cys-54, Cys-69/Cys-80, and Cys-81/Cys-86.

It belongs to the three-finger toxin family. Long-chain subfamily. Type II alpha-neurotoxin sub-subfamily. Monomer in solution, homodimer in crystal state. As to expression, expressed by the venom gland.

The protein localises to the secreted. Its function is as follows. Binds with high affinity to muscular (alpha-1/CHRNA1) and neuronal (alpha-7/CHRNA7) nicotinic acetylcholine receptor (nAChR) and inhibits acetylcholine from binding to the receptor, thereby impairing neuromuscular and neuronal transmission. The sequence is that of Alpha-bungarotoxin isoform V31 from Bungarus multicinctus (Many-banded krait).